Consider the following 722-residue polypeptide: Probable carboxypeptidase X1 (722 aa).

The signal sequence occupies residues 1–20 (MWGLLLAVTAFAPSVGLGLG). The segment at 30–54 (APGSTLAPHSSVAQPSTKANETSER) is disordered. The span at 36 to 49 (APHSSVAQPSTKAN) shows a compositional bias: polar residues. N-linked (GlcNAc...) asparagine glycosylation is found at N49, N200, N210, and N307. The F5/8 type C domain occupies 103–263 (PGCPPLGLES…PCLRAEILAC (161 aa)). A disulfide bridge links C105 with C263. A Peptidase M14 domain is found at 287-610 (RHHNYKAMRK…DALLTYLEQV (324 aa)). Zn(2+)-binding residues include H349 and E352. Residue N461 is glycosylated (N-linked (GlcNAc...) asparagine). Residue H487 coordinates Zn(2+). The active-site Proton donor/acceptor is the E580.

Belongs to the peptidase M14 family. It depends on Zn(2+) as a cofactor. In terms of tissue distribution, strongly expressed in testis and spleen. Moderately expressed in salivary gland, brain, heart, lung, and kidney. Extremely low expression in liver and muscle. No expression in eye, adrenal, and white adipose tissues.

The protein resides in the secreted. Its function is as follows. May be involved in cell-cell interactions. No carboxypeptidase activity was found yet. This Mus musculus (Mouse) protein is Probable carboxypeptidase X1 (Cpxm1).